The following is a 170-amino-acid chain: RNA pyrophosphohydrolase (170 aa).

The Nudix hydrolase domain occupies 6–149 (GFRPNVGIVI…KRDVYRRALK (144 aa)). Positions 38-59 (GGIDDGETPEQAMYRELYEEVG) match the Nudix box motif.

It belongs to the Nudix hydrolase family. RppH subfamily. A divalent metal cation is required as a cofactor.

Accelerates the degradation of transcripts by removing pyrophosphate from the 5'-end of triphosphorylated RNA, leading to a more labile monophosphorylated state that can stimulate subsequent ribonuclease cleavage. The protein is RNA pyrophosphohydrolase of Aliivibrio salmonicida (strain LFI1238) (Vibrio salmonicida (strain LFI1238)).